The following is a 488-amino-acid chain: Cis-aconitate decarboxylase (488 aa).

This sequence belongs to the PrpD family. As to quaternary structure, homodimer. In terms of tissue distribution, expressed in LPS-tolerized macrophages (at protein level). Expressed in the luminal epithelial cells of pregnant uterus. Expressed in microglia and macrophage cells.

The protein resides in the mitochondrion. The enzyme catalyses cis-aconitate + H(+) = itaconate + CO2. Cis-aconitate decarboxylase that catalyzes production of itaconate and is involved in the inhibition of the inflammatory response. Acts as a negative regulator of the Toll-like receptors (TLRs)-mediated inflammatory innate response by stimulating the tumor necrosis factor alpha-induced protein TNFAIP3 expression via reactive oxygen species (ROS) in LPS-tolerized macrophages. Involved in antimicrobial response of innate immune cells; ACOD1-mediated itaconic acid production contributes to the antimicrobial activity of macrophages by generating itaconate, leading to alkylation of proteins, such as TFEB. Involved in antiviral response following infection by flavivirus in neurons: ACOD1-mediated itaconate production inhibits the activity of succinate dehydrogenase, generating a metabolic state in neurons that suppresses replication of viral genomes. Plays a role in the embryo implantation. In Mus musculus (Mouse), this protein is Cis-aconitate decarboxylase.